The sequence spans 664 residues: MKRRNADCSKLRRPLKRNRITEGIYGSTFLYLKFLVVWALVLLADFVLEFRFEYLWPFWLFIRSVYDSFRYQGLAFSVFFVCVAFTSNIICLLFIPIQWLFFAASTYVWVQYVWHTERGVCLPTVSLWILFVYIEAAIRFKDLKNFHVDLCRPFAAHCIGYPVVTLGFGFKSYVSYKMRLRKQKEVQKENEFYMQLLQQALPPEQQMLQKQEKEAEEAAKGLPDMDSSILIHHNGGIPANKKLSTTLPEIEYREKGKEKDKDAKKHNLGINNNNILQPVDSKIQEIEYMENHINSKRLNNDLVGSTENLLKEDSCTASSKNYKNASGVVNSSPRSHSATNGSIPSSSSKNEKKQKCTSKSPSAHKDLMENCIPNNQLSKPDALVRLEQDIKKLKADLQASRQVEQELRSQISSLSSTERGIRSEMGQLRQENELLQNKLHNAVQMKQKDKQNISQLEKKLKAEQEARSFVEKQLMEEKKRKKLEEATAARAVAFAAASRGECTETLRNRIRELEAEGKKLTMDMKVKEDQIRELELKVQELRKYKENEKDTEVLMSALSAMQDKTQHLENSLSAETRIKLDLFSALGDAKRQLEIAQGQILQKDQEIKDLKQKIAEVMAVMPSITYSAATSPLSPVSPHYSSKFVETSPSGLDPNASVYQPLKK.

A run of 4 helical transmembrane segments spans residues 28–48 (TFLYLKFLVVWALVLLADFVL), 75–95 (AFSVFFVCVAFTSNIICLLFI), 120–140 (VCLPTVSLWILFVYIEAAIRF), and 154–174 (FAAHCIGYPVVTLGFGFKSYV). The span at 253-265 (REKGKEKDKDAKK) shows a compositional bias: basic and acidic residues. A disordered region spans residues 253–274 (REKGKEKDKDAKKHNLGINNNN). A Phosphoserine modification is found at serine 305. Positions 320 to 348 (KNYKNASGVVNSSPRSHSATNGSIPSSSS) are enriched in polar residues. The segment at 320-367 (KNYKNASGVVNSSPRSHSATNGSIPSSSSKNEKKQKCTSKSPSAHKDL) is disordered. N-linked (GlcNAc...) asparagine glycosylation occurs at asparagine 324. Phosphoserine is present on serine 332. Residues asparagine 340 and asparagine 452 are each glycosylated (N-linked (GlcNAc...) asparagine). Residues 630 to 664 (TSPLSPVSPHYSSKFVETSPSGLDPNASVYQPLKK) are disordered. Phosphoserine occurs at positions 631 and 634. Asparagine 655 carries N-linked (GlcNAc...) asparagine glycosylation.

This sequence belongs to the macoilin family.

The protein resides in the rough endoplasmic reticulum membrane. Its subcellular location is the nucleus membrane. Plays a role in the regulation of neuronal activity. The protein is Macoilin (MACO1) of Sus scrofa (Pig).